A 350-amino-acid chain; its full sequence is S-adenosylmethionine:tRNA ribosyltransferase-isomerase (350 aa).

Belongs to the QueA family. As to quaternary structure, monomer.

It is found in the cytoplasm. The catalysed reaction is 7-aminomethyl-7-carbaguanosine(34) in tRNA + S-adenosyl-L-methionine = epoxyqueuosine(34) in tRNA + adenine + L-methionine + 2 H(+). Its pathway is tRNA modification; tRNA-queuosine biosynthesis. Transfers and isomerizes the ribose moiety from AdoMet to the 7-aminomethyl group of 7-deazaguanine (preQ1-tRNA) to give epoxyqueuosine (oQ-tRNA). The polypeptide is S-adenosylmethionine:tRNA ribosyltransferase-isomerase (Vibrio campbellii (strain ATCC BAA-1116)).